Reading from the N-terminus, the 541-residue chain is MLFCDDSKKYLKEQNINLKNEFDKDDKRVEKFSLKHQNIYFDYSKNLINNYILKSLLESAEKSSLKDKIKQMFNGAKINSTEHRAVLHTALRDLSSTPLIVDGQDIRQEVTKEKQRVKELVEKVVSGRWRGFSGKKITDIVNIGIGGSDLGPKMVVRALQPYHCTDLKVHFVSNVDADSLLQALHVVDPETTLFIIASKSFSTEETLLNSISAREWLLDHYYEDEKAVANHFVAISSKLDKVKEFGIDLEHCYKMWDWVGGRYSLWSSIGMSIAFAIGYDNFEKLLAGAYSVDKYFKETEFSKNIPVIMALLASYYSCTYNSQSQALLPYDERLCYFVDYLQQADMESNGKSVNIAGGTVNYQTGVVLWGGVGTNGQHAFHQLLHQGNIFIPVDFIAIATSHHNYDNHQQALLANCFAQSQALMFGQSYDMVYNELLKSGLNETQAKKLAAHKVIPGNRPSTTILLDELSPYSLGALIALYEHKIFVQGVLWDINSYDQWGVELGKKLGKNILKAMNDDSSDEYQNLDDSTRQLIAKVKNK.

The active-site Proton donor is the Glu347. Catalysis depends on residues His378 and Lys506.

This sequence belongs to the GPI family.

It is found in the cytoplasm. It catalyses the reaction alpha-D-glucose 6-phosphate = beta-D-fructose 6-phosphate. Its pathway is carbohydrate biosynthesis; gluconeogenesis. It participates in carbohydrate degradation; glycolysis; D-glyceraldehyde 3-phosphate and glycerone phosphate from D-glucose: step 2/4. In terms of biological role, catalyzes the reversible isomerization of glucose-6-phosphate to fructose-6-phosphate. The chain is Glucose-6-phosphate isomerase from Francisella tularensis subsp. holarctica (strain OSU18).